The sequence spans 330 residues: D-xylose-binding periplasmic protein (330 aa).

An N-terminal signal peptide occupies residues 1 to 23 (MKIKNILLTLCTSLLLTNVAAHA).

This sequence belongs to the bacterial solute-binding protein 2 family.

The protein resides in the periplasm. Functionally, involved in the high-affinity D-xylose membrane transport system. Binds with high affinity to xylose. The polypeptide is D-xylose-binding periplasmic protein (xylF) (Escherichia coli (strain K12)).